Reading from the N-terminus, the 457-residue chain is CUB1 family protein C30C2.08 (457 aa).

Coiled coils occupy residues 119–174 (TQND…NISK) and 418–448 (QELV…EERE).

Belongs to the CUB1 family.

It is found in the cytoplasm. It localises to the nucleus. Its function is as follows. Involved in bleomycin tolerance with links to DNA repair and/or proteasome function. The polypeptide is CUB1 family protein C30C2.08 (Schizosaccharomyces pombe (strain 972 / ATCC 24843) (Fission yeast)).